The following is a 219-amino-acid chain: GTP cyclohydrolase-2 (219 aa).

Residue 51–55 (RIHSE) coordinates GTP. Positions 56, 67, and 69 each coordinate Zn(2+). GTP-binding positions include Gln72, 94-96 (EGR), and Thr116. Asp128 functions as the Proton acceptor in the catalytic mechanism. Arg130 acts as the Nucleophile in catalysis. 2 residues coordinate GTP: Thr151 and Lys156.

The protein belongs to the GTP cyclohydrolase II family. Requires Zn(2+) as cofactor.

The enzyme catalyses GTP + 4 H2O = 2,5-diamino-6-hydroxy-4-(5-phosphoribosylamino)-pyrimidine + formate + 2 phosphate + 3 H(+). It participates in cofactor biosynthesis; riboflavin biosynthesis; 5-amino-6-(D-ribitylamino)uracil from GTP: step 1/4. Its function is as follows. Catalyzes the conversion of GTP to 2,5-diamino-6-ribosylamino-4(3H)-pyrimidinone 5'-phosphate (DARP), formate and pyrophosphate. In Pasteurella multocida (strain Pm70), this protein is GTP cyclohydrolase-2.